Consider the following 288-residue polypeptide: Aquaporin PIP2-4 (288 aa).

Residues 1–24 are disordered; that stretch reads MAKDIEASGPEAGEFSAKDYTDPP. Helical transmembrane passes span 42–62 and 79–99; these read AVIA…ATVI and CGGV…FILV. The NPA 1 motif lies at 111-113; that stretch reads NPA. 3 helical membrane-spanning segments follow: residues 130-150, 172-192, and 206-226; these read LLYI…VKGF, GTGL…VFSA, and VLAP…TIPI. An NPA 2 motif is present at residues 232 to 234; sequence NPA. Residues 254 to 274 traverse the membrane as a helical segment; that stretch reads IFWVGPLIGAAIAAAYHQYVL.

The protein belongs to the MIP/aquaporin (TC 1.A.8) family. PIP (TC 1.A.8.11) subfamily. In terms of assembly, homomers. May interact with PIP1-2 to form heteromers. As to expression, expressed in the root growing zone at 5-6 mm from the root tip.

It is found in the cell membrane. In terms of biological role, water channel required to facilitate the transport of water across cell membrane. Active as homomers. Increased activity when heteromerization with PIP1-2. This Zea mays (Maize) protein is Aquaporin PIP2-4 (PIP2-4).